We begin with the raw amino-acid sequence, 290 residues long: ATP synthase gamma chain (290 aa).

Belongs to the ATPase gamma chain family. F-type ATPases have 2 components, CF(1) - the catalytic core - and CF(0) - the membrane proton channel. CF(1) has five subunits: alpha(3), beta(3), gamma(1), delta(1), epsilon(1). CF(0) has three main subunits: a, b and c.

It localises to the cell membrane. Its function is as follows. Produces ATP from ADP in the presence of a proton gradient across the membrane. The gamma chain is believed to be important in regulating ATPase activity and the flow of protons through the CF(0) complex. This chain is ATP synthase gamma chain, found in Buchnera aphidicola subsp. Diuraphis noxia.